The following is a 398-amino-acid chain: 4-hydroxy-3-methylbut-2-enyl diphosphate reductase (398 aa).

Position 66 (C66) interacts with [4Fe-4S] cluster. Position 96 (H96) interacts with (2E)-4-hydroxy-3-methylbut-2-enyl diphosphate. A dimethylallyl diphosphate-binding site is contributed by H96. Residue H96 coordinates isopentenyl diphosphate. Residue C157 participates in [4Fe-4S] cluster binding. H185 is a (2E)-4-hydroxy-3-methylbut-2-enyl diphosphate binding site. H185 provides a ligand contact to dimethylallyl diphosphate. H185 lines the isopentenyl diphosphate pocket. E187 acts as the Proton donor in catalysis. T250 is a binding site for (2E)-4-hydroxy-3-methylbut-2-enyl diphosphate. C288 contributes to the [4Fe-4S] cluster binding site. The (2E)-4-hydroxy-3-methylbut-2-enyl diphosphate site is built by S317, S318, N319, and S379. Dimethylallyl diphosphate-binding residues include S317, S318, N319, and S379. Positions 317, 318, 319, and 379 each coordinate isopentenyl diphosphate.

It belongs to the IspH family. [4Fe-4S] cluster is required as a cofactor.

The enzyme catalyses isopentenyl diphosphate + 2 oxidized [2Fe-2S]-[ferredoxin] + H2O = (2E)-4-hydroxy-3-methylbut-2-enyl diphosphate + 2 reduced [2Fe-2S]-[ferredoxin] + 2 H(+). It carries out the reaction dimethylallyl diphosphate + 2 oxidized [2Fe-2S]-[ferredoxin] + H2O = (2E)-4-hydroxy-3-methylbut-2-enyl diphosphate + 2 reduced [2Fe-2S]-[ferredoxin] + 2 H(+). The protein operates within isoprenoid biosynthesis; dimethylallyl diphosphate biosynthesis; dimethylallyl diphosphate from (2E)-4-hydroxy-3-methylbutenyl diphosphate: step 1/1. It participates in isoprenoid biosynthesis; isopentenyl diphosphate biosynthesis via DXP pathway; isopentenyl diphosphate from 1-deoxy-D-xylulose 5-phosphate: step 6/6. Catalyzes the conversion of 1-hydroxy-2-methyl-2-(E)-butenyl 4-diphosphate (HMBPP) into a mixture of isopentenyl diphosphate (IPP) and dimethylallyl diphosphate (DMAPP). Acts in the terminal step of the DOXP/MEP pathway for isoprenoid precursor biosynthesis. This chain is 4-hydroxy-3-methylbut-2-enyl diphosphate reductase, found in Synechococcus sp. (strain CC9311).